Here is a 321-residue protein sequence, read N- to C-terminus: Nucleus-vacuole junction protein 1 (321 aa).

Positions 1-22 are cleaved as a signal peptide; sequence MTRPPLVRGIFSLGLSVAVLKG. The TSC13-binding stretch occupies residues 73-125; the sequence is ELSWRKVFNFISRQSSELDTRIYVLILLLSFLLPIAWTVLDGDRETTLEDKDN. Residues 94-114 traverse the membrane as a helical segment; that stretch reads IYVLILLLSFLLPIAWTVLDG. The OSH1-binding stretch occupies residues 139–195; sequence KHYNDGERAVLQFGKNRSEPIILSYKDMNVLEGEHEFTSKEEHSNSHLTSKSENALN. Phosphoserine occurs at positions 156 and 199. The tract at residues 211-275 is disordered; that stretch reads LEEDKNEPNG…SLKSSTSFPI (65 aa). The VAC8-binding stretch occupies residues 233-321; sequence DCSSSSEVES…EQAYSQPFRY (89 aa). The segment covering 242–262 has biased composition (basic and acidic residues); that stretch reads SQSKCRKESTAEPDSLSRDTR. Residues 263 to 272 show a composition bias toward low complexity; sequence TTSSLKSSTS. A phosphoserine mark is found at Ser285 and Ser298. The disordered stretch occupies residues 299-321; that stretch reads PTKSSNLDAQVNTEQAYSQPFRY.

Interacts with OSH1, TSC13 and VAC8.

Its subcellular location is the nucleus outer membrane. Its function is as follows. Involved in the formation of nucleus-vacuole junctions (NVJs) during piecemeal microautophagy of the nucleus (PMN). NVJs are interorganelle interfaces mediated by NVJ1 in the nuclear envelope and VAC8 on the vacuole membrane. Together, NVJ1 and VAC8 form Velcro-like patches through which teardrop-like portions of the nucleus are pinched off into the vacuolar lumen and degraded by the PMN process. Also acts as an outer-nuclear membrane receptor for OSH1 and TSC13. This chain is Nucleus-vacuole junction protein 1 (NVJ1), found in Saccharomyces cerevisiae (strain ATCC 204508 / S288c) (Baker's yeast).